The sequence spans 957 residues: SH3 domain-binding protein 4-B (957 aa).

The region spanning glutamate 54–tyrosine 113 is the SH3 1 domain. Residues threonine 312–valine 449 enclose the ZU5 domain. Residues threonine 649–lysine 719 form the SH3 2 domain.

As to quaternary structure, homodimer or homooligomer.

It localises to the membrane. The protein localises to the clathrin-coated pit. The protein resides in the cytoplasmic vesicle. Its subcellular location is the clathrin-coated vesicle. It is found in the nucleus. Possible role in regulating endocytosis of the transferrin receptor at the plasma membrane. Alternatively, may function as a negative regulator of the amino acid-induced TOR signaling by inhibiting the formation of active Rag GTPase complexes. Preferentially binds inactive Rag GTPase complexes and prevents their interaction with the mTORC1 complex inhibiting its relocalization to lysosomes and its activation. Thereby, may indirectly regulate cell growth, proliferation and autophagy. The sequence is that of SH3 domain-binding protein 4-B (sh3bp4-b) from Xenopus laevis (African clawed frog).